Consider the following 228-residue polypeptide: Prolactin (228 aa).

The N-terminal stretch at 1-29 (MCPKGSSVKGSLLLLLLMSSRFLFKAVES) is a signal peptide. An intrachain disulfide couples C33 to C40. S55, S63, and S119 each carry phosphoserine. 2 cysteine pairs are disulfide-bonded: C87–C203 and C220–C228.

The protein belongs to the somatotropin/prolactin family. In terms of assembly, interacts with PRLR.

The protein resides in the secreted. In terms of biological role, prolactin acts primarily on the mammary gland by promoting lactation. In Monodelphis domestica (Gray short-tailed opossum), this protein is Prolactin (PRL).